A 312-amino-acid chain; its full sequence is uncharacterized protein (312 aa).

A run of 10 helical transmembrane segments spans residues 13–33, 45–65, 81–101, 105–125, 133–153, 162–182, 198–218, 229–249, 260–280, and 283–303; these read AAGTIFLLIGTVCFASKSIWI, AVLLYRQLLAVPLFWLIFLIY, ACGAGVFCFFLSPLLDFIGLN, AMVERILLMSYPLFVFGFTAC, IQDLFAVLAVMFGLFLALGGW, MIGAVFILLSSAVYAGYLVLS, GMTAAGAAMMLYTGIKSAAGM, MYGLFAVIAVVTTVIPFVLML, AAAISMAGPILTIFYGALFLG, and LGLIQVIGCGGVFFVITGMEY. An EamA domain is found at 173–303; that stretch reads AVYAGYLVLS…VFFVITGMEY (131 aa).

This sequence belongs to the EamA transporter family.

The protein localises to the cell membrane. This is an uncharacterized protein from Bacillus subtilis (strain 168).